The primary structure comprises 303 residues: Tyrosine-protein phosphatase 3 (303 aa).

Positions 24–292 constitute a Tyrosine-protein phosphatase domain; it reads YMIIEGLNEE…VFLYTVSQEL (269 aa). The active-site Phosphocysteine intermediate is the C227.

Belongs to the protein-tyrosine phosphatase family. Non-receptor class subfamily.

It is found in the cytoplasm. It carries out the reaction O-phospho-L-tyrosyl-[protein] + H2O = L-tyrosyl-[protein] + phosphate. In terms of biological role, contributes to dephosphorylation of tyrosine 15 of cdc2. The polypeptide is Tyrosine-protein phosphatase 3 (pyp3) (Schizosaccharomyces pombe (strain 972 / ATCC 24843) (Fission yeast)).